The chain runs to 363 residues: Probable mannitol dehydrogenase 3 (363 aa).

Zn(2+)-binding residues include C51, H73, C104, C107, C110, C118, and C168.

The protein belongs to the zinc-containing alcohol dehydrogenase family. The cofactor is Zn(2+).

The enzyme catalyses D-mannitol + NAD(+) = D-mannose + NADH + H(+). In terms of biological role, oxidizes mannitol to mannose. Provides the initial step by which translocated mannitol is committed to central metabolism and, by regulating mannitol pool size, is important in regulating salt tolerance at the cellular level. The protein is Probable mannitol dehydrogenase 3 (CAD3) of Stylosanthes humilis (Townsville stylo).